The sequence spans 379 residues: Origin of replication complex subunit 2 (379 aa).

The tract at residues 1-25 (MALRGGHAAAAAGVSSGSEDDDEEA) is disordered. Over residues 8–17 (AAAAAGVSSG) the composition is skewed to low complexity.

The protein belongs to the ORC2 family. In terms of assembly, component of the origin recognition complex (ORC) composed of at least ORC1, ORC2, ORC3, ORC4, ORC5 and ORC6. ORC is regulated in a cell-cycle and development dependent manner. It is sequentially assembled at the exit from anaphase of mitosis and disassembled as cells enter S phase.

It localises to the nucleus. In terms of biological role, essential protein. Component of the origin recognition complex (ORC) that binds origins of replication. DNA-binding is ATP-dependent, however specific DNA sequences that define origins of replication have not been identified so far. ORC is required to assemble the pre-replication complex necessary to initiate DNA replication. This chain is Origin of replication complex subunit 2, found in Oryza sativa subsp. indica (Rice).